The following is a 1189-amino-acid chain: Tyrosine-protein phosphatase non-receptor type 14 (1189 aa).

One can recognise an FERM domain in the interval F21 to K306. A phosphoserine mark is found at S314, S461, S486, S591, S593, S594, and S646. The tract at residues A744–P775 is disordered. The span at S760–G771 shows a compositional bias: polar residues. The residue at position 833 (S833) is a Phosphoserine. One can recognise a Tyrosine-protein phosphatase domain in the interval V911 to F1182. Residue C1123 is the Phosphocysteine intermediate of the active site. Substrate is bound by residues C1123 to R1129 and Q1167.

This sequence belongs to the protein-tyrosine phosphatase family. Non-receptor class subfamily. In terms of assembly, interacts with FLT4; the interaction is enhanced by stimulation with VEGFC. Interacts (via PPxY motifs) with YAP1 (via WW domains); this interaction leads to the cytoplasmic sequestration of YAP1 and inhibits its transcriptional coactivator activity. In terms of processing, ubiquitinated by the ECS (Elongin BC-CUL2/5-SOCS-box protein)/LRR1 E3 ligase complex and subsequently targeted to proteasomal degradation. Thymus; in cells of both hematopoietic and non-hematopoietic origins.

It localises to the cytoplasm. Its subcellular location is the cytoskeleton. The protein localises to the nucleus. The catalysed reaction is O-phospho-L-tyrosyl-[protein] + H2O = L-tyrosyl-[protein] + phosphate. Protein tyrosine phosphatase which may play a role in the regulation of lymphangiogenesis, cell-cell adhesion, cell-matrix adhesion, cell migration, cell growth and also regulates TGF-beta gene expression, thereby modulating epithelial-mesenchymal transition. Mediates beta-catenin dephosphorylation at adhesion junctions. Acts as a negative regulator of the oncogenic property of YAP, a downstream target of the hippo pathway, in a cell density-dependent manner. May function as a tumor suppressor. This chain is Tyrosine-protein phosphatase non-receptor type 14 (Ptpn14), found in Mus musculus (Mouse).